A 64-amino-acid chain; its full sequence is UPF0337 protein SAB0772 (64 aa).

Residues 1–40 (MADESKFEQAKGNVKETIGNVTDNKNLENEGKEDKASGKA) form a disordered region. Over residues 25 to 40 (KNLENEGKEDKASGKA) the composition is skewed to basic and acidic residues.

Belongs to the UPF0337 (CsbD) family.

The chain is UPF0337 protein SAB0772 from Staphylococcus aureus (strain bovine RF122 / ET3-1).